We begin with the raw amino-acid sequence, 886 residues long: Valine--tRNA ligase (886 aa).

The short motif at 53–63 (PNVTGSLHMGH) is the 'HIGH' region element. The short motif at 540-544 (KMSKS) is the 'KMSKS' region element. Lysine 543 provides a ligand contact to ATP. A coiled-coil region spans residues 820-851 (IDVAAERRRMEKDLAAAQKELASTAAKLANAD).

It belongs to the class-I aminoacyl-tRNA synthetase family. ValS type 1 subfamily. As to quaternary structure, monomer.

The protein resides in the cytoplasm. The enzyme catalyses tRNA(Val) + L-valine + ATP = L-valyl-tRNA(Val) + AMP + diphosphate. Its function is as follows. Catalyzes the attachment of valine to tRNA(Val). As ValRS can inadvertently accommodate and process structurally similar amino acids such as threonine, to avoid such errors, it has a 'posttransfer' editing activity that hydrolyzes mischarged Thr-tRNA(Val) in a tRNA-dependent manner. This is Valine--tRNA ligase from Mycobacterium leprae (strain TN).